A 226-amino-acid polypeptide reads, in one-letter code: Ribose-5-phosphate isomerase A (226 aa).

Substrate-binding positions include 28–31, 83–86, and 97–100; these read TGST, DGAD, and KGGG. Residue E106 is the Proton acceptor of the active site. Residue K124 coordinates substrate.

Belongs to the ribose 5-phosphate isomerase family. Homotetramer.

The catalysed reaction is aldehydo-D-ribose 5-phosphate = D-ribulose 5-phosphate. The protein operates within carbohydrate biosynthesis; D-ribose 5-phosphate biosynthesis. In terms of biological role, catalyzes the reversible conversion of ribose-5-phosphate to ribulose 5-phosphate. In Methanocaldococcus jannaschii (strain ATCC 43067 / DSM 2661 / JAL-1 / JCM 10045 / NBRC 100440) (Methanococcus jannaschii), this protein is Ribose-5-phosphate isomerase A.